A 77-amino-acid chain; its full sequence is Defensin-B6 (77 aa).

The first 20 residues, 1 to 20 (MKTLFFLSVFIFLLLHLSPG), serve as a signal peptide directing secretion. 3 cysteine pairs are disulfide-bonded: cysteine 43–cysteine 70, cysteine 50–cysteine 64, and cysteine 54–cysteine 71.

This sequence belongs to the beta-defensin family. Lowly expressed in spleen, kidney and lung.

It is found in the secreted. Its function is as follows. Has antimicrobial activity. In Ornithorhynchus anatinus (Duckbill platypus), this protein is Defensin-B6.